The chain runs to 476 residues: Ataxin-10 (476 aa).

Arg-10 bears the Omega-N-methylarginine mark. 2 positions are modified to phosphoserine: Ser-13 and Ser-78. A Phosphothreonine modification is found at Thr-83. Residue Ser-431 is modified to Phosphoserine.

It belongs to the ataxin-10 family. As to quaternary structure, homooligomer. Interacts with GNB2. Interacts with IQCB1. Interacts with OGT. Polyubiquitinated. In terms of processing, phosphorylation at Ser-13 by AURKB promotes the association of ATXN10 with PLK1. Phosphorylation at Ser-78 and Thr-83 by PLK1 may play a role in the regulation of cytokinesis and may stimulate the proteasome-mediated degradation of ATXN10.

It localises to the cytoplasm. The protein resides in the perinuclear region. The protein localises to the midbody. It is found in the cytoskeleton. Its subcellular location is the cilium basal body. It localises to the microtubule organizing center. The protein resides in the centrosome. The protein localises to the centriole. Its function is as follows. May play a role in the regulation of cytokinesis. May play a role in signaling by stimulating protein glycosylation. Induces neuritogenesis by activating the Ras-MAP kinase pathway and is necessary for the survival of cerebellar neurons. Does not appear to play a major role in ciliogenesis. The sequence is that of Ataxin-10 (ATXN10) from Pongo abelii (Sumatran orangutan).